A 156-amino-acid polypeptide reads, in one-letter code: Probable histone H2A.6 (156 aa).

Disordered stretches follow at residues 1 to 26 (MDVG…KKPV) and 129 to 156 (KKTA…QARS). The span at 9–26 (AAKKAVGRKLGGPKKKPV) shows a compositional bias: basic residues. Basic and acidic residues predominate over residues 130–147 (KTAEKADKPAKASKDKAA). An SPKK motif motif is present at residues 149–152 (SPKK).

The protein belongs to the histone H2A family. As to quaternary structure, the nucleosome is a histone octamer containing two molecules each of H2A, H2B, H3 and H4 assembled in one H3-H4 heterotetramer and two H2A-H2B heterodimers. The octamer wraps approximately 147 bp of DNA.

It is found in the nucleus. The protein localises to the chromosome. In terms of biological role, core component of nucleosome. Nucleosomes wrap and compact DNA into chromatin, limiting DNA accessibility to the cellular machineries which require DNA as a template. Histones thereby play a central role in transcription regulation, DNA repair, DNA replication and chromosomal stability. DNA accessibility is regulated via a complex set of post-translational modifications of histones, also called histone code, and nucleosome remodeling. This chain is Probable histone H2A.6, found in Oryza sativa subsp. indica (Rice).